Consider the following 358-residue polypeptide: Histamine H2 receptor (358 aa).

The Extracellular portion of the chain corresponds to 1 to 22 (MEPNGTVHSCCLDSMALKVTIS). An N-linked (GlcNAc...) asparagine glycan is attached at Asn4. Residues 23–44 (VVLTTLILITIAGNVVVCLAVS) traverse the membrane as a helical segment. The Cytoplasmic segment spans residues 45–57 (LNRRLRSLTNCFI). A helical transmembrane segment spans residues 58-81 (VSLAATDLLLGLLVLPFSAIYQLS). Over 82–92 (FTWSFGHVFCN) the chain is Extracellular. Cys91 and Cys173 are joined by a disulfide. A helical membrane pass occupies residues 93 to 114 (IYTSLDVMLCTASILNLFMISL). Residues 115-134 (DRYCAVTDPLRYPVLVTPVR) lie on the Cytoplasmic side of the membrane. Residues 135–159 (VAISLVFIWVISITLSFLSIHLGWN) form a helical membrane-spanning segment. The Extracellular portion of the chain corresponds to 160 to 179 (SRNGTRGGNDTFKCKVQVNE). A helical membrane pass occupies residues 180–203 (VYGLVDGLVTFYLPLLIMCVTYYR). Residues 204-233 (IFKIAREQAKRINHISSWKAATIREHKATV) are Cytoplasmic-facing. The helical transmembrane segment at 234-257 (TLAAVMGAFIICWFPYFTAFVYRG) threads the bilayer. At 258–266 (LRGDDAINE) the chain is on the extracellular side. Residues 267–288 (AVEGIVLWLGYANSALNPILYA) traverse the membrane as a helical segment. Residues 289–358 (ALNRDFRTAY…LTHPQGNPIR (70 aa)) lie on the Cytoplasmic side of the membrane. Cys304 is lipidated: S-palmitoyl cysteine.

The protein belongs to the G-protein coupled receptor 1 family.

The protein resides in the cell membrane. In terms of biological role, the H2 subclass of histamine receptors mediates gastric acid secretion. The activity of this receptor is mediated by G proteins which activate adenylyl cyclase. In Rattus norvegicus (Rat), this protein is Histamine H2 receptor (Hrh2).